A 1323-amino-acid polypeptide reads, in one-letter code: Receptor tyrosine-protein kinase let-23 (1323 aa).

An N-terminal signal peptide occupies residues 1–20 (MRYPPSIGSILLIIPIFLTF). Residues 21-818 (FGNSNAQLWK…DIASRQRKTR (798 aa)) are Extracellular-facing. Residues N91 and N169 are each glycosylated (N-linked (GlcNAc...) asparagine). Disulfide bonds link C220–C228, C224–C236, C244–C251, C248–C262, C263–C271, C267–C279, C282–C291, C295–C322, C326–C337, C341–C356, and C359–C364. N255 carries N-linked (GlcNAc...) asparagine glycosylation. N-linked (GlcNAc...) asparagine glycosylation is present at N376. 20 disulfides stabilise this stretch: C520-C529, C524-C537, C540-C549, C553-C567, C570-C577, C574-C585, C588-C604, C608-C620, C623-C632, C627-C644, C647-C660, C670-C693, C696-C703, C700-C715, C717-C731, C735-C750, C753-C763, C757-C771, C774-C787, and C791-C805. N561 carries an N-linked (GlcNAc...) asparagine glycan. A glycan (N-linked (GlcNAc...) asparagine) is linked at N655. N746 is a glycosylation site (N-linked (GlcNAc...) asparagine). A glycan (N-linked (GlcNAc...) asparagine) is linked at N776. The helical transmembrane segment at 819-839 (MVIIGSVLFGFAVMFLFILLV) threads the bilayer. At 840–1323 (YWRCQRIGKK…EEVSQKETCL (484 aa)) the chain is on the cytoplasmic side. The 268-residue stretch at 885–1152 (TKLDKKLGAG…EFCKVPQLFL (268 aa)) folds into the Protein kinase domain. ATP contacts are provided by residues 891–899 (LGAGAFGTV) and K919. D1010 functions as the Proton acceptor in the catalytic mechanism. Residues 1265 to 1289 (GQTELSPSNGDYYNQPNTPSSSSGY) show a composition bias toward polar residues. The interval 1265–1323 (GQTELSPSNGDYYNQPNTPSSSSGYYNEPHLKTKKPETSEEAEAVQYENEEVSQKETCL) is disordered. Over residues 1293–1302 (PHLKTKKPET) the composition is skewed to basic and acidic residues. The segment covering 1303–1315 (SEEAEAVQYENEE) has biased composition (acidic residues).

It belongs to the protein kinase superfamily. Tyr protein kinase family. EGF receptor subfamily. Expressed in vulval precursor cells (at protein level). Expressed in ALA neurons, 2 ventral head neurons, a single neuron in the tail, pharyngeal-intestinal valve and posterior arcade epithelial cells.

The protein resides in the apical cell membrane. The protein localises to the basolateral cell membrane. It carries out the reaction L-tyrosyl-[protein] + ATP = O-phospho-L-tyrosyl-[protein] + ADP + H(+). In terms of biological role, tyrosine-protein kinase receptor which, upon binding ligand lin-3, activates 2 signaling cascades: the let-60/Ras and MAP kinase signaling pathway and the let-60-independent phospholipase C-mediated Ca(2+) signaling pathway. Each pathway regulates distinct functions. By activating let-60/Ras, regulates larval development, induction of vulva cell precursors during vulva development, male spicule formation and posterior development of the epidermis. Probably by activating phospholipase plc-3 and inositol 1,4,5-trisphosphate receptor itr-1 signaling cascade downstream of ligand lin-3, plays a role in ovulation by promoting ovulatory gonadal sheath cell contractions. Probably by regulating neuronal transmission in ALA neurons, mediates, independently of let-60/Ras, the decrease in pharyngeal pumping and locomotion during the quiescent state that precedes each larval molt, downstream of lin-3 and upstream of plc-3. In Caenorhabditis elegans, this protein is Receptor tyrosine-protein kinase let-23.